The chain runs to 259 residues: Phosphate import ATP-binding protein PstB (259 aa).

An ABC transporter domain is found at 11–254; that stretch reads AESKNLNFYY…PDNPRTEDYI (244 aa). 43-50 is an ATP binding site; sequence GPSGCGKS.

The protein belongs to the ABC transporter superfamily. Phosphate importer (TC 3.A.1.7) family. The complex is composed of two ATP-binding proteins (PstB), two transmembrane proteins (PstC and PstA) and a solute-binding protein (PstS).

Its subcellular location is the cell inner membrane. It catalyses the reaction phosphate(out) + ATP + H2O = ADP + 2 phosphate(in) + H(+). Its function is as follows. Part of the ABC transporter complex PstSACB involved in phosphate import. Responsible for energy coupling to the transport system. The chain is Phosphate import ATP-binding protein PstB from Geobacter sulfurreducens (strain ATCC 51573 / DSM 12127 / PCA).